Reading from the N-terminus, the 194-residue chain is Calcium-binding protein J (194 aa).

EF-hand domains follow at residues 62 to 97 and 98 to 133; these read WDKD…MTKA and PVVE…AVAC. Ca(2+) contacts are provided by Asp75, Asp77, Asn79, Glu86, Asp111, Asp113, Ser115, His117, and Glu122.

This sequence belongs to the recoverin family.

The protein is Calcium-binding protein J (cbpJ) of Dictyostelium discoideum (Social amoeba).